A 468-amino-acid chain; its full sequence is Hydroxymethylglutaryl-CoA lyase, mitochondrial (468 aa).

One can recognise a Pyruvate carboxyltransferase domain in the interval 168–435; that stretch reads VKIVEVGPRD…HTNVDLGKLI (268 aa). Arg176 contributes to the substrate binding site. A divalent metal cation is bound by residues Asp177, His368, and His370. Cys401 is a catalytic residue. An a divalent metal cation-binding site is contributed by Asn410.

This sequence belongs to the HMG-CoA lyase family. As to quaternary structure, homodimer. The cofactor is a divalent metal cation.

Its subcellular location is the mitochondrion matrix. It catalyses the reaction (3S)-3-hydroxy-3-methylglutaryl-CoA = acetoacetate + acetyl-CoA. It functions in the pathway metabolic intermediate metabolism; (S)-3-hydroxy-3-methylglutaryl-CoA degradation; acetoacetate from (S)-3-hydroxy-3-methylglutaryl-CoA: step 1/1. In terms of biological role, involved in the catabolism of branched amino acids such as leucine. The sequence is that of Hydroxymethylglutaryl-CoA lyase, mitochondrial (HMGCL) from Arabidopsis thaliana (Mouse-ear cress).